The sequence spans 1398 residues: MAP-homologous protein 1 (1398 aa).

Met1 carries the post-translational modification N-acetylmethionine. Residues 21-77 (GWLVRPSASTSKSSRPGKSESKANSVAPDIQMDTARPPVFETSVDSSSSILSSNDKG) are disordered. Polar residues predominate over residues 27–36 (SASTSKSSRP). The segment covering 63–73 (SVDSSSSILSS) has biased composition (low complexity). Position 81 is a phosphoserine (Ser81). Disordered stretches follow at residues 90–144 (NQRA…APAP), 156–186 (HRKK…GAAI), and 191–210 (TATI…PPSY). Composition is skewed to polar residues over residues 91-102 (QRANAGSTSVPT) and 114-123 (VVETNLSNVE). Basic and acidic residues predominate over residues 159 to 186 (KDQEQQEKERERKERSPSPTHVDRGAAI). A Glycyl lysine isopeptide (Lys-Gly) (interchain with G-Cter in ubiquitin) cross-link involves residue Lys221. At Thr222 the chain carries Phosphothreonine. 4 disordered regions span residues 244–270 (HSPE…PDPR), 296–382 (SSAS…PSSH), 395–428 (GNNN…SSME), and 515–548 (NPEE…NNSQ). Phosphoserine occurs at positions 309, 311, 354, and 357. Low complexity predominate over residues 357–371 (SIVDTVDSNSDVSSS). Over residues 372–381 (AQNNNQTPSS) the composition is skewed to polar residues. Residues 396 to 426 (NNNNNSTNASSLSANVNNPDTSSTSLWSSSS) are compositionally biased toward low complexity. Residues 521-538 (ANAKSKEEMAPQKQNEVE) are compositionally biased toward basic and acidic residues. Thr577 carries the phosphothreonine modification. Low complexity predominate over residues 605-615 (STSSLASMVSS). Disordered stretches follow at residues 605–630 (STSS…EILP), 1148–1169 (LKSP…PNSE), and 1203–1223 (DAED…HEDV). The segment covering 1160–1169 (GGNQAQPNSE) has biased composition (polar residues). The segment covering 1208 to 1223 (VEFREGDDSNVNHEDV) has biased composition (basic and acidic residues). Residues 1227–1258 (DQQFRDEVDIKNKYSIIKRELEHEKLVGGGDL) form a tau/MAP repeat-like region. The interval 1313-1372 (QEETAFRTKDEQQSSQSNDSSANASPTTDPISTGSNTSRTNDNAHIPPTDAPGFDKFMNN) is disordered. Residues 1325–1337 (QSSQSNDSSANAS) are compositionally biased toward low complexity. A compositionally biased stretch (polar residues) spans 1338–1355 (PTTDPISTGSNTSRTNDN).

Its subcellular location is the cytoplasm. The protein resides in the cytoskeleton. The protein localises to the spindle. Functionally, essential for the formation and/or stabilization of microtubules. Binds to microtubules in vitro. The protein is MAP-homologous protein 1 (MHP1) of Saccharomyces cerevisiae (strain ATCC 204508 / S288c) (Baker's yeast).